Consider the following 249-residue polypeptide: Chitooligosaccharide deacetylase (249 aa).

Mg(2+)-binding residues include His-61 and His-125.

It belongs to the YdjC deacetylase family. ChbG subfamily. Homodimer. Requires Mg(2+) as cofactor.

It is found in the cytoplasm. It catalyses the reaction N,N'-diacetylchitobiose + H2O = N-acetyl-beta-D-glucosaminyl-(1-&gt;4)-D-glucosamine + acetate. It carries out the reaction diacetylchitobiose-6'-phosphate + H2O = N'-monoacetylchitobiose-6'-phosphate + acetate. Its pathway is glycan degradation; chitin degradation. Its function is as follows. Involved in the degradation of chitin. ChbG is essential for growth on the acetylated chitooligosaccharides chitobiose and chitotriose but is dispensable for growth on cellobiose and chitosan dimer, the deacetylated form of chitobiose. Deacetylation of chitobiose-6-P and chitotriose-6-P is necessary for both the activation of the chb promoter by the regulatory protein ChbR and the hydrolysis of phosphorylated beta-glucosides by the phospho-beta-glucosidase ChbF. Catalyzes the removal of only one acetyl group from chitobiose-6-P to yield monoacetylchitobiose-6-P, the inducer of ChbR and the substrate of ChbF. This Escherichia coli (strain K12 / MC4100 / BW2952) protein is Chitooligosaccharide deacetylase.